We begin with the raw amino-acid sequence, 443 residues long: UDP-N-acetylmuramate--L-alanine ligase (443 aa).

Gly110 to Ser116 lines the ATP pocket.

The protein belongs to the MurCDEF family.

Its subcellular location is the cytoplasm. It catalyses the reaction UDP-N-acetyl-alpha-D-muramate + L-alanine + ATP = UDP-N-acetyl-alpha-D-muramoyl-L-alanine + ADP + phosphate + H(+). Its pathway is cell wall biogenesis; peptidoglycan biosynthesis. Its function is as follows. Cell wall formation. This Lactococcus lactis subsp. cremoris (strain MG1363) protein is UDP-N-acetylmuramate--L-alanine ligase.